Here is a 235-residue protein sequence, read N- to C-terminus: SMN complex subunit yip11/gem2 (235 aa).

The segment at 1-34 is disordered; sequence MPSKRKRNPLQYQTSGSLDEETNQRSAFPQIDNN. The segment covering 24-34 has biased composition (polar residues); the sequence is QRSAFPQIDNN. A phosphoserine mark is found at Ser117 and Ser118.

This sequence belongs to the gemin-2 family. In terms of assembly, part of the core SMN complex at least composed of smn1, yip11/gem2, gem6, gem7 and gem8. Interacts with smn1; the interaction is direct.

Its subcellular location is the nucleus. The SMN complex catalyzes the assembly of small nuclear ribonucleoproteins (snRNPs), the building blocks of the spliceosome, and thereby plays an important role in the splicing of cellular pre-mRNAs. Most spliceosomal snRNPs contain a common set of Sm proteins smb1, smd1, smd2, smd3, sme1, smf1 and smg1 that assemble in a heptameric protein ring on the Sm site of the small nuclear RNA to form the core snRNP. In the cytosol, the Sm proteins smd1, smd2, sme1, smf1 and smg1 (5Sm) are trapped in an inactive 6S pICln-Sm complex by the chaperone saf5. To complete assembly of core snRNPs, the SMN complex accepts 5Sm from saf5. Binding of snRNA inside 5Sm ultimately triggers eviction of the SMN complex, thereby allowing binding of smd3 and smb1 to complete assembly of the core snRNP. Within the SMN complex, yip11/gem2 constrains the conformation of 5Sm, thereby promoting 5Sm binding to snRNA containing the snRNP code (a nonameric Sm site and a 3'-adjacent stem-loop), thus preventing progression of assembly until a cognate substrate is bound. The chain is SMN complex subunit yip11/gem2 (yip11) from Schizosaccharomyces pombe (strain 972 / ATCC 24843) (Fission yeast).